The primary structure comprises 178 residues: MNKISKVVVVFIALLTFLALMMQSQEVKTPGLLIQFENETSEAEVKAILENYDIPVNYTIDYNSNIGRGMYYIEVDEDKIYELRKDENWTSVVEIKKGNYNIIMLSEEFVPDENVLAMLEKNNLQLKKAVVCYIQFGDGSAPWVVGENCILERDAIRIKNELETNEKVLIVGLDDIVG.

It belongs to the UPF0228 family.

The sequence is that of UPF0228 protein MA_4223 from Methanosarcina acetivorans (strain ATCC 35395 / DSM 2834 / JCM 12185 / C2A).